The following is a 214-amino-acid chain: MPVQVKICGINRPDALAAAVAGGARYVGLVFYERSPRHVAPELAAELARQVPTGVRVVGLFVDPDALMLERVLGSVPLDLIQLHGEETPERVAAVRAAHGIEVMKAVKVAGAADLDRAAAYEGACDRLLFDAKAPKGVAALPGGNGLSFDWTLLAGRTWARPWMLSGGLNAGNLAEAVRATGATAVDVSSGVEDRPGHKDPALVAGFLACAAAL.

It belongs to the TrpF family.

It catalyses the reaction N-(5-phospho-beta-D-ribosyl)anthranilate = 1-(2-carboxyphenylamino)-1-deoxy-D-ribulose 5-phosphate. It participates in amino-acid biosynthesis; L-tryptophan biosynthesis; L-tryptophan from chorismate: step 3/5. The protein is N-(5'-phosphoribosyl)anthranilate isomerase of Rhodospirillum centenum (strain ATCC 51521 / SW).